Here is a 132-residue protein sequence, read N- to C-terminus: Small ribosomal subunit protein uS8 (132 aa).

It belongs to the universal ribosomal protein uS8 family. In terms of assembly, part of the 30S ribosomal subunit. Contacts proteins S5 and S12.

In terms of biological role, one of the primary rRNA binding proteins, it binds directly to 16S rRNA central domain where it helps coordinate assembly of the platform of the 30S subunit. The protein is Small ribosomal subunit protein uS8 of Xanthobacter autotrophicus (strain ATCC BAA-1158 / Py2).